The primary structure comprises 79 residues: Sec-independent protein translocase protein TatA (79 aa).

The helical transmembrane segment at 1-21 (MGGFTSIWHWVIVLLVIVLLF) threads the bilayer. Positions 54-79 (ELKTLDAQATQTKVHETSEIKSKQES) are disordered. Over residues 66-79 (KVHETSEIKSKQES) the composition is skewed to basic and acidic residues.

It belongs to the TatA/E family. The Tat system comprises two distinct complexes: a TatABC complex, containing multiple copies of TatA, TatB and TatC subunits, and a separate TatA complex, containing only TatA subunits. Substrates initially bind to the TatABC complex, which probably triggers association of the separate TatA complex to form the active translocon.

Its subcellular location is the cell inner membrane. Part of the twin-arginine translocation (Tat) system that transports large folded proteins containing a characteristic twin-arginine motif in their signal peptide across membranes. TatA could form the protein-conducting channel of the Tat system. The chain is Sec-independent protein translocase protein TatA from Helicobacter pylori (strain J99 / ATCC 700824) (Campylobacter pylori J99).